Reading from the N-terminus, the 51-residue chain is Insulin (51 aa).

3 disulfides stabilise this stretch: Cys7-Cys37, Cys19-Cys50, and Cys36-Cys41.

It belongs to the insulin family. In terms of assembly, heterodimer of a B chain and an A chain linked by two disulfide bonds.

It is found in the secreted. Insulin decreases blood glucose concentration. It increases cell permeability to monosaccharides, amino acids and fatty acids. It accelerates glycolysis, the pentose phosphate cycle, and glycogen synthesis in liver. The chain is Insulin (INS) from Elephas maximus (Indian elephant).